The chain runs to 396 residues: uncharacterized protein (396 aa).

Lysine 219 carries the N6-(pyridoxal phosphate)lysine modification.

It belongs to the class-V pyridoxal-phosphate-dependent aminotransferase family. Pyridoxal 5'-phosphate serves as cofactor.

The protein localises to the cytoplasm. It localises to the nucleus. This is an uncharacterized protein from Schizosaccharomyces pombe (strain 972 / ATCC 24843) (Fission yeast).